Reading from the N-terminus, the 217-residue chain is Adenylate kinase (217 aa).

ATP is bound at residue Gly10 to Thr15. Residues Ser30–Val59 are NMP. AMP-binding positions include Thr31, Arg36, Gln57–Val59, Gly85–Arg88, and Gln92. Positions Gly122–Asp159 are LID. Residues Arg123 and Ile132–Tyr133 each bind ATP. AMP contacts are provided by Arg156 and Arg167. ATP is bound at residue Gly202.

Belongs to the adenylate kinase family. Monomer.

Its subcellular location is the cytoplasm. The enzyme catalyses AMP + ATP = 2 ADP. It participates in purine metabolism; AMP biosynthesis via salvage pathway; AMP from ADP: step 1/1. Its function is as follows. Catalyzes the reversible transfer of the terminal phosphate group between ATP and AMP. Plays an important role in cellular energy homeostasis and in adenine nucleotide metabolism. The protein is Adenylate kinase of Teredinibacter turnerae (strain ATCC 39867 / T7901).